Consider the following 1580-residue polypeptide: Adhesion G protein-coupled receptor L3 (1580 aa).

Residues methionine 1–glycine 19 form the signal peptide. Over glycine 20–threonine 949 the chain is Extracellular. The segment at serine 23 to alanine 81 is disordered. The region spanning serine 103–valine 192 is the SUEL-type lectin domain. 5 cysteine pairs are disulfide-bonded: cysteine 104–cysteine 134, cysteine 113–cysteine 191, cysteine 146–cysteine 178, cysteine 159–cysteine 165, and cysteine 203–cysteine 385. The N-linked (GlcNAc...) asparagine glycan is linked to asparagine 161. The Olfactomedin-like domain maps to leucine 202–proline 461. Residues tyrosine 317 to glutamate 347 are interaction with FLRT3. Residues aspartate 332, asparagine 380, alanine 381, and valine 435 each contribute to the Ca(2+) site. The interval glutamate 494–proline 540 is disordered. The span at serine 496–arginine 521 shows a compositional bias: low complexity. The segment covering serine 522 to serine 539 has biased composition (polar residues). Asparagine 532, asparagine 617, asparagine 827, asparagine 840, asparagine 885, and asparagine 911 each carry an N-linked (GlcNAc...) asparagine glycan. The GAIN-B domain occupies aspartate 756–lysine 935. 2 disulfide bridges follow: cysteine 886–cysteine 917 and cysteine 905–cysteine 919. The tract at residues cysteine 886–lysine 935 is GPS. The segment at threonine 923–alanine 939 is stachel. The helical transmembrane segment at tryptophan 950–phenylalanine 970 threads the bilayer. The Cytoplasmic segment spans residues arginine 971–asparagine 978. A helical transmembrane segment spans residues threonine 979–isoleucine 999. N-linked (GlcNAc...) asparagine glycosylation occurs at asparagine 1000. The Extracellular segment spans residues asparagine 1000–alanine 1007. The chain crosses the membrane as a helical span at residues cysteine 1008–leucine 1028. Over glutamate 1029–tyrosine 1050 the chain is Cytoplasmic. A helical membrane pass occupies residues phenylalanine 1051 to tyrosine 1071. Residues arginine 1072–phenylalanine 1088 are Extracellular-facing. A helical membrane pass occupies residues isoleucine 1089–isoleucine 1109. Over alanine 1110 to serine 1142 the chain is Cytoplasmic. A helical transmembrane segment spans residues tryptophan 1143 to methionine 1163. The Extracellular segment spans residues tyrosine 1164 to threonine 1169. An N-linked (GlcNAc...) asparagine glycan is attached at asparagine 1166. A helical membrane pass occupies residues valine 1170–phenylalanine 1190. Residues histidine 1191–leucine 1580 are Cytoplasmic-facing. The interval glycine 1213 to serine 1238 is disordered. Phosphoserine is present on serine 1254. The interval phenylalanine 1555–leucine 1580 is disordered. The PDZ-binding motif lies at histidine 1575–leucine 1580.

The protein belongs to the G-protein coupled receptor 2 family. LN-TM7 subfamily. In terms of assembly, heterodimer of 2 chains generated by proteolytic processing; the large extracellular N-terminal fragment and the membrane-bound C-terminal fragment predominantly remain associated and non-covalently linked. Interacts (via olfactomedin-like domain) with FLRT1 (via extracellular domain). Interacts (via olfactomedin-like domain) with FLRT2 (via extracellular domain). Interacts (via olfactomedin-like domain) with FLRT3 (via extracellular domain); the interaction is direct. Interacts (via extracellular domain) with TENM1. Interacts (via extracellular domain) with TENM2. Interacts (via extracellular domain) with TENM3. Identified in a complex with FLRT3 and UNC5B; does not interact with UNC5B by itself. Identified in a complex with FLRT3 and UNC5D; does not interact with UNC5D by itself. Interacts (via PDZ-binding motif) with SHANK3. Interacts (via PDZ-binding motif) with DLG4. Post-translationally, autoproteolytically processed at the GPS region of the GAIN-B domain; this cleavage modulates receptor activity. Brain-specific distribution but low levels are also detected in lung and spleen.

It is found in the cell membrane. Its subcellular location is the postsynaptic cell membrane. It localises to the cell projection. The protein localises to the axon. The protein resides in the cell junction. Its activity is regulated as follows. Forms a heterodimer of 2 chains generated by proteolytic processing that remain associated through non-covalent interactions mediated by the GAIN-B domain. In the inactivated receptor, the Stachel sequence (also named stalk) is embedded in the GAIN-B domain, where it adopts a beta-strand conformation. On activation, the Stachel moves into the 7 transmembrane region and adopts a twisted hook-shaped configuration that forms contacts within the receptor, leading to coupling of a G-alpha protein, which activates signaling. The cleaved GAIN-B and N-terminal domains can then dissociate from the rest of the receptor. Its function is as follows. Orphan adhesion G-protein coupled receptor (aGPCR), which mediates synapse specificity. Ligand binding causes a conformation change that triggers signaling via guanine nucleotide-binding proteins (G proteins) and modulates the activity of downstream effectors. ADGRL3 is coupled with different classes of G alpha proteins, such as G(12)/G(13), G(s), G(i) or G(q), depending on the context. Coupling to G(12)/G(13) G proteins, which mediates the activation Rho small GTPases is the most efficient. Following G-protein coupled receptor activation, associates with cell adhesion molecules that are expressed at the surface of adjacent cells to direct synapse specificity. Specifically mediates the establishment of Schaffer-collateral synapses formed by CA3-region axons on CA1-region pyramidal neurons in the hippocampus. Localizes to postsynaptic spines in excitatory synapses in the S.oriens and S.radiatum and interacts with presynaptic cell adhesion molecules FLRT3 and TENM2, promoting synapse formation. Plays a role in the development of glutamatergic synapses in the cortex. Important in determining the connectivity rates between the principal neurons in the cortex. In terms of biological role, orphan adhesion G-protein coupled receptor (aGPCR), which mediates synapse specificity. Ligand binding causes a conformation change that triggers signaling via guanine nucleotide-binding proteins (G proteins) and modulates the activity of downstream effectors, such as adenylate cyclase. Isoform 1 is specifically coupled to G(s) G proteins and mediates activation of adenylate cyclase activity. Following G-protein coupled receptor activation, undergoes liquid-liquid phase transition, associates with (1) cell adhesion molecules that are expressed at the surface of adjacent cells, as well as (2) PDZ-containing proteins, such as SHANK3 and DLG4, in the cytoplasm to direct synapse formation. In Bos taurus (Bovine), this protein is Adhesion G protein-coupled receptor L3.